The primary structure comprises 133 residues: Large-conductance mechanosensitive channel (133 aa).

Transmembrane regions (helical) follow at residues 14–34 and 67–87; these read VVDL…VSSL and GNFI…FMFV.

The protein belongs to the MscL family. Homopentamer.

Its subcellular location is the cell membrane. Channel that opens in response to stretch forces in the membrane lipid bilayer. May participate in the regulation of osmotic pressure changes within the cell. The chain is Large-conductance mechanosensitive channel from Bacillus cereus (strain AH187).